The sequence spans 247 residues: Uridylate kinase (247 aa).

18 to 21 (KLSG) provides a ligand contact to ATP. Glycine 60 is a UMP binding site. ATP is bound by residues glycine 61 and arginine 65. UMP-binding positions include aspartate 80 and 141 to 148 (TGNPFFTT). ATP is bound by residues threonine 168, tyrosine 174, and aspartate 177.

This sequence belongs to the UMP kinase family. As to quaternary structure, homohexamer.

It localises to the cytoplasm. It catalyses the reaction UMP + ATP = UDP + ADP. It functions in the pathway pyrimidine metabolism; CTP biosynthesis via de novo pathway; UDP from UMP (UMPK route): step 1/1. Its activity is regulated as follows. Inhibited by UTP. Its function is as follows. Catalyzes the reversible phosphorylation of UMP to UDP. This Pseudomonas putida (strain ATCC 47054 / DSM 6125 / CFBP 8728 / NCIMB 11950 / KT2440) protein is Uridylate kinase.